The chain runs to 204 residues: Urease accessory protein UreG (204 aa).

Position 12–19 (12–19) interacts with GTP; it reads GPVGSGKT.

Belongs to the SIMIBI class G3E GTPase family. UreG subfamily. As to quaternary structure, homodimer. UreD, UreF and UreG form a complex that acts as a GTP-hydrolysis-dependent molecular chaperone, activating the urease apoprotein by helping to assemble the nickel containing metallocenter of UreC. The UreE protein probably delivers the nickel.

The protein resides in the cytoplasm. Its function is as follows. Facilitates the functional incorporation of the urease nickel metallocenter. This process requires GTP hydrolysis, probably effectuated by UreG. The chain is Urease accessory protein UreG from Hahella chejuensis (strain KCTC 2396).